Here is a 230-residue protein sequence, read N- to C-terminus: Orotidine 5'-phosphate decarboxylase (230 aa).

Substrate contacts are provided by residues aspartate 10, lysine 32, 59–68 (DLKYHDIPNT), threonine 119, arginine 180, glutamine 189, glycine 209, and arginine 210. Catalysis depends on lysine 61, which acts as the Proton donor.

It belongs to the OMP decarboxylase family. Type 1 subfamily. As to quaternary structure, homodimer.

It catalyses the reaction orotidine 5'-phosphate + H(+) = UMP + CO2. Its pathway is pyrimidine metabolism; UMP biosynthesis via de novo pathway; UMP from orotate: step 2/2. Functionally, catalyzes the decarboxylation of orotidine 5'-monophosphate (OMP) to uridine 5'-monophosphate (UMP). This is Orotidine 5'-phosphate decarboxylase from Haemophilus influenzae (strain PittEE).